Consider the following 77-residue polypeptide: Translational regulator CsrA (77 aa).

Belongs to the CsrA/RsmA family. In terms of assembly, homodimer; the beta-strands of each monomer intercalate to form a hydrophobic core, while the alpha-helices form wings that extend away from the core.

It localises to the cytoplasm. Functionally, a translational regulator that binds mRNA to regulate translation initiation and/or mRNA stability. Usually binds in the 5'-UTR at or near the Shine-Dalgarno sequence preventing ribosome-binding, thus repressing translation. Its main target seems to be the major flagellin gene, while its function is anatagonized by FliW. The chain is Translational regulator CsrA from Desulfitobacterium hafniense (strain DSM 10664 / DCB-2).